The sequence spans 115 residues: MNPLIQSLTEGQLRSDIPEFRAGDTVRVHAKVVEGTRERIQIFEGVVISRKGQGISEMYTVRKISGGIGVERTFPIHTPRVDKIEVVRYGKVRRAKLYYLRALQGKAARIKEIRR.

It belongs to the bacterial ribosomal protein bL19 family.

In terms of biological role, this protein is located at the 30S-50S ribosomal subunit interface and may play a role in the structure and function of the aminoacyl-tRNA binding site. In Streptococcus uberis (strain ATCC BAA-854 / 0140J), this protein is Large ribosomal subunit protein bL19.